The primary structure comprises 211 residues: Superoxide dismutase [Mn] (211 aa).

H27, H82, D165, and H169 together coordinate Mn(2+).

It belongs to the iron/manganese superoxide dismutase family. Homodimer. Requires Mn(2+) as cofactor.

The enzyme catalyses 2 superoxide + 2 H(+) = H2O2 + O2. Functionally, destroys superoxide anion radicals which are normally produced within the cells and which are toxic to biological systems. The sequence is that of Superoxide dismutase [Mn] (sodA) from Bordetella pertussis (strain Tohama I / ATCC BAA-589 / NCTC 13251).